A 487-amino-acid polypeptide reads, in one-letter code: Uronate isomerase (487 aa).

The protein belongs to the metallo-dependent hydrolases superfamily. Uronate isomerase family.

It carries out the reaction D-glucuronate = D-fructuronate. The enzyme catalyses aldehydo-D-galacturonate = keto-D-tagaturonate. Its pathway is carbohydrate metabolism; pentose and glucuronate interconversion. The chain is Uronate isomerase from Caulobacter vibrioides (strain ATCC 19089 / CIP 103742 / CB 15) (Caulobacter crescentus).